The following is a 143-amino-acid chain: Insertion element IS2 uncharacterized 16.4 kDa protein (143 aa).

This Escherichia coli protein is Insertion element IS2 uncharacterized 16.4 kDa protein.